Here is a 255-residue protein sequence, read N- to C-terminus: MTGELTLLPAVDVQGGRAVQLQQGVASSERAFGDPLDVAQKWQGLGAQWIHLVDLDAAFGHGSNTKIISSVVEQLDINVEVSGGIRDQRSLESALSAGATRVNIGTAALEDPQWCDEVVGRYGEQVAIGLDVRGDQLAARGWTREGGKVLDVLARLEDAGCRRYVVTDVASDGMLTGPNYELLGRICARTQGKVVASGGIAALEDLRRLRGLVPIGVEGAIVGTALYVGNFTLPAALDVCRAPIPADSSPMPPTD.

The active-site Proton acceptor is aspartate 12. The active-site Proton donor is aspartate 131.

The protein belongs to the HisA/HisF family.

It is found in the cytoplasm. The enzyme catalyses 1-(5-phospho-beta-D-ribosyl)-5-[(5-phospho-beta-D-ribosylamino)methylideneamino]imidazole-4-carboxamide = 5-[(5-phospho-1-deoxy-D-ribulos-1-ylimino)methylamino]-1-(5-phospho-beta-D-ribosyl)imidazole-4-carboxamide. Its pathway is amino-acid biosynthesis; L-histidine biosynthesis; L-histidine from 5-phospho-alpha-D-ribose 1-diphosphate: step 4/9. The sequence is that of 1-(5-phosphoribosyl)-5-[(5-phosphoribosylamino)methylideneamino] imidazole-4-carboxamide isomerase from Cutibacterium acnes (strain DSM 16379 / KPA171202) (Propionibacterium acnes).